The sequence spans 467 residues: Microtubule-associated tyrosine carboxypeptidase 1 (467 aa).

The segment covering 1–10 (MVLDSGTQVY) has biased composition (polar residues). Disordered regions lie at residues 1-40 (MVLD…PLYP) and 77-111 (MRRS…TLRP). His276 serves as a coordination point for Zn(2+). The Nucleophile role is filled by Glu277. 2 residues coordinate Zn(2+): His281 and Glu312.

The protein belongs to the peptidase MATCAP family. Requires Zn(2+) as cofactor.

Its subcellular location is the cytoplasm. It is found in the cytoskeleton. It catalyses the reaction C-terminal L-alpha-aminoacyl-L-glutamyl-L-glutamyl-L-tyrosyl-[tubulin] + H2O = C-terminal L-alpha-aminoacyl-L-glutamyl-L-glutamyl-[tubulin] + L-tyrosine. The catalysed reaction is C-terminal L-alpha-aminoacyl-L-glutamyl-L-glutamyl-L-phenylalanyl-[tubulin] + H2O = C-terminal L-alpha-aminoacyl-L-glutamyl-L-glutamyl-[tubulin] + L-phenylalanine. In terms of biological role, tyrosine carboxypeptidase that removes the C-terminal tyrosine residue of alpha-tubulin, thereby regulating microtubule dynamics and function. Also able to remove the C-terminal phenylalanine residue of alpha-tubulin TUBA8. Recognizes adjacent tubulin dimers along the same protofilament. The sequence is that of Microtubule-associated tyrosine carboxypeptidase 1 from Mus musculus (Mouse).